Consider the following 292-residue polypeptide: Pyruvate formate-lyase 2-activating enzyme (292 aa).

One can recognise a Radical SAM core domain in the interval 33–287; it reads NDGEGIRTVV…REMAERAGLQ (255 aa). [4Fe-4S] cluster contacts are provided by C47, C51, and C54. 53 to 55 provides a ligand contact to S-adenosyl-L-methionine; that stretch reads WCA. One can recognise a 4Fe-4S ferredoxin-type domain in the interval 62 to 96; it reads GKIQTVRREAKCLHCAKCLRDADECPSGAFERIGR. S-adenosyl-L-methionine contacts are provided by residues G126, 175–177, and H247; that span reads DLK.

It belongs to the organic radical-activating enzymes family. [4Fe-4S] cluster is required as a cofactor.

The protein resides in the cytoplasm. It carries out the reaction glycyl-[formate C-acetyltransferase] + reduced [flavodoxin] + S-adenosyl-L-methionine = glycin-2-yl radical-[formate C-acetyltransferase] + semiquinone [flavodoxin] + 5'-deoxyadenosine + L-methionine + H(+). In terms of biological role, activation of pyruvate formate-lyase 2 under anaerobic conditions by generation of an organic free radical, using S-adenosylmethionine and reduced flavodoxin as cosubstrates to produce 5'-deoxy-adenosine. The polypeptide is Pyruvate formate-lyase 2-activating enzyme (pflC) (Escherichia coli (strain K12)).